A 117-amino-acid chain; its full sequence is Large ribosomal subunit protein uL18 (117 aa).

Belongs to the universal ribosomal protein uL18 family. In terms of assembly, part of the 50S ribosomal subunit; part of the 5S rRNA/L5/L18/L25 subcomplex. Contacts the 5S and 23S rRNAs.

This is one of the proteins that bind and probably mediate the attachment of the 5S RNA into the large ribosomal subunit, where it forms part of the central protuberance. In Pectobacterium carotovorum subsp. carotovorum (strain PC1), this protein is Large ribosomal subunit protein uL18.